The sequence spans 308 residues: Ribosomal RNA small subunit methyltransferase H (308 aa).

Residues 36–38 (GGH), D55, F82, D103, and Q110 contribute to the S-adenosyl-L-methionine site.

It belongs to the methyltransferase superfamily. RsmH family.

It is found in the cytoplasm. The enzyme catalyses cytidine(1402) in 16S rRNA + S-adenosyl-L-methionine = N(4)-methylcytidine(1402) in 16S rRNA + S-adenosyl-L-homocysteine + H(+). Its function is as follows. Specifically methylates the N4 position of cytidine in position 1402 (C1402) of 16S rRNA. In Helicobacter pylori (strain ATCC 700392 / 26695) (Campylobacter pylori), this protein is Ribosomal RNA small subunit methyltransferase H.